A 181-amino-acid chain; its full sequence is ATP-dependent protease subunit HslV (181 aa).

Thr11 is an active-site residue. Residues Ala166, Cys169, and Thr172 each contribute to the Na(+) site.

It belongs to the peptidase T1B family. HslV subfamily. In terms of assembly, a double ring-shaped homohexamer of HslV is capped on each side by a ring-shaped HslU homohexamer. The assembly of the HslU/HslV complex is dependent on binding of ATP.

The protein resides in the cytoplasm. It carries out the reaction ATP-dependent cleavage of peptide bonds with broad specificity.. With respect to regulation, allosterically activated by HslU binding. In terms of biological role, protease subunit of a proteasome-like degradation complex believed to be a general protein degrading machinery. The sequence is that of ATP-dependent protease subunit HslV from Chlorobaculum tepidum (strain ATCC 49652 / DSM 12025 / NBRC 103806 / TLS) (Chlorobium tepidum).